Consider the following 731-residue polypeptide: Penicillin-binding protein 2a (731 aa).

The Cytoplasmic portion of the chain corresponds to 1–56 (MKLDKLFEKFLSLFKKETSELEDSDSTILRRSRSDRKKLAQVGPIRKFWRRYHLTK). A helical; Signal-anchor for type II membrane protein membrane pass occupies residues 57–77 (IILILGLSAGLLVGIYLFAVA). The hydrophobic; associated with cytoplasmic membrane. Required for transglycosylase activity, but not for lipid II binding stretch occupies residues 78-156 (KSTNVNDLQN…FLAIVTAGRS (79 aa)). Positions 78-300 (KSTNVNDLQN…SQLHDKYEGK (223 aa)) are transglycosylase. Residues 78–731 (KSTNVNDLQN…IWDSIVNLFR (654 aa)) lie on the Extracellular side of the membrane. The active-site Proton donor; for transglycosylase activity is Glu-131. Residues 301 to 731 (ISDYRYPSYF…IWDSIVNLFR (431 aa)) are transpeptidase. Ser-410 serves as the catalytic Acyl-ester intermediate; for transpeptidase activity. The interval 674-694 (ANTKRQVQTNDNSQTDDNLSD) is disordered. The span at 676–690 (TKRQVQTNDNSQTDD) shows a compositional bias: polar residues.

It in the N-terminal section; belongs to the glycosyltransferase 51 family. This sequence in the C-terminal section; belongs to the transpeptidase family. As to quaternary structure, homodimer. May also form higher order oligomers. Self-association may depend on its transmembrane and/or cytoplasmic regions. Interacts with MacP; interaction is required for the function of this protein.

The protein localises to the cell membrane. Its subcellular location is the secreted. The protein resides in the cell wall. It carries out the reaction Preferential cleavage: (Ac)2-L-Lys-D-Ala-|-D-Ala. Also transpeptidation of peptidyl-alanyl moieties that are N-acyl substituents of D-alanine.. It catalyses the reaction [GlcNAc-(1-&gt;4)-Mur2Ac(oyl-L-Ala-gamma-D-Glu-L-Lys-D-Ala-D-Ala)](n)-di-trans,octa-cis-undecaprenyl diphosphate + beta-D-GlcNAc-(1-&gt;4)-Mur2Ac(oyl-L-Ala-gamma-D-Glu-L-Lys-D-Ala-D-Ala)-di-trans,octa-cis-undecaprenyl diphosphate = [GlcNAc-(1-&gt;4)-Mur2Ac(oyl-L-Ala-gamma-D-Glu-L-Lys-D-Ala-D-Ala)](n+1)-di-trans,octa-cis-undecaprenyl diphosphate + di-trans,octa-cis-undecaprenyl diphosphate + H(+). It participates in cell wall biogenesis; peptidoglycan biosynthesis. Its function is as follows. Cell wall formation. Synthesis of cross-linked peptidoglycan (PG) from the lipid intermediates. Binds dansylated lipid II and catalyzes the polymerization of glycan chains. Hydrolyzes S2d (N-benzoyl-D-alanylmercaptoacetic acid) molecule, a synthetic thiolester analog of cell wall stem peptide. Active against bocillin, a fluorescent penicillin. No transpeptidase activity with non-fluorescent lysine-containing lipid II as substrate. This is Penicillin-binding protein 2a from Streptococcus pneumoniae serotype 2 (strain D39 / NCTC 7466).